We begin with the raw amino-acid sequence, 106 residues long: Immunoglobulin lambda constant 3 (106 aa).

Residues 7–101 (PSVTLFPPSS…EGSTVEKTVA (95 aa)) enclose the Ig-like domain. A disulfide bond links Cys28 and Cys87.

Immunoglobulins are composed of two identical heavy chains and two identical light chains; disulfide-linked.

It is found in the secreted. Its subcellular location is the cell membrane. Constant region of immunoglobulin light chains. Immunoglobulins, also known as antibodies, are membrane-bound or secreted glycoproteins produced by B lymphocytes. In the recognition phase of humoral immunity, the membrane-bound immunoglobulins serve as receptors which, upon binding of a specific antigen, trigger the clonal expansion and differentiation of B lymphocytes into immunoglobulins-secreting plasma cells. Secreted immunoglobulins mediate the effector phase of humoral immunity, which results in the elimination of bound antigens. The antigen binding site is formed by the variable domain of one heavy chain, together with that of its associated light chain. Thus, each immunoglobulin has two antigen binding sites with remarkable affinity for a particular antigen. The variable domains are assembled by a process called V-(D)-J rearrangement and can then be subjected to somatic hypermutations which, after exposure to antigen and selection, allow affinity maturation for a particular antigen. In Homo sapiens (Human), this protein is Immunoglobulin lambda constant 3.